The primary structure comprises 319 residues: MSLNFLDFEQPIAELEAKIDSLTAVSRQDEKLDINIDEEVHRLREKSVELTRKIFADLGAWQIAQLARHPQRPYTLDYVRLAFDEFDELAGDRAYADDKAIVGGIARLDGRPVMIIGHQKGRETKEKIRRNFGMPAPEGYRKALRLMQMAERFKMPIITFIDTPGAYPGVGAEERGQSEAIARNLREMSRLGVPVVCTVIGEGGSGGALAIGVGDKVNMLQYSTYSVISPEGCASILWKSADKAPLAAEAMGIIAPRLKELKLIDSIIPEPLGGAHRNPEAMAASLKAQLLTDLADLDVLSTEDLKNRRYQRLMSYGYA.

The 262-residue stretch at 35 to 296 folds into the CoA carboxyltransferase C-terminal domain; it reads NIDEEVHRLR…KAQLLTDLAD (262 aa).

Belongs to the AccA family. Acetyl-CoA carboxylase is a heterohexamer composed of biotin carboxyl carrier protein (AccB), biotin carboxylase (AccC) and two subunits each of ACCase subunit alpha (AccA) and ACCase subunit beta (AccD).

The protein localises to the cytoplasm. The enzyme catalyses N(6)-carboxybiotinyl-L-lysyl-[protein] + acetyl-CoA = N(6)-biotinyl-L-lysyl-[protein] + malonyl-CoA. It participates in lipid metabolism; malonyl-CoA biosynthesis; malonyl-CoA from acetyl-CoA: step 1/1. Component of the acetyl coenzyme A carboxylase (ACC) complex. First, biotin carboxylase catalyzes the carboxylation of biotin on its carrier protein (BCCP) and then the CO(2) group is transferred by the carboxyltransferase to acetyl-CoA to form malonyl-CoA. This is Acetyl-coenzyme A carboxylase carboxyl transferase subunit alpha from Escherichia coli O45:K1 (strain S88 / ExPEC).